The primary structure comprises 462 residues: Lipase A (462 aa).

The N-terminal stretch at 1-21 is a signal peptide; the sequence is MRVSLRSITSLLAAATAAVLA. An intrachain disulfide couples cysteine 122 to cysteine 294. Residues serine 205, aspartate 355, and histidine 387 each act as charge relay system in the active site. An intrachain disulfide couples cysteine 371 to cysteine 415.

The protein belongs to the AB hydrolase superfamily. Lipase family. As to quaternary structure, monomer.

Its subcellular location is the secreted. The enzyme catalyses a triacylglycerol + H2O = a diacylglycerol + a fatty acid + H(+). In terms of biological role, hydrolyzes triglycerides, with a preference for substrates with short-chain lengths (C4 to C8). Has the highest activity with tributyrin (C4), followed by tricaproin (C6) and tricaprylin (C8). Can also hydrolyze vinylacetate (C2) and triolein (C18), but with lower efficiency. Has no activity with tripalmitin (C16). In Moesziomyces aphidis (Pseudozyma aphidis), this protein is Lipase A.